Reading from the N-terminus, the 257-residue chain is Ribosomal RNA small subunit methyltransferase J (257 aa).

Residues 109–110, 125–126, and Asp179 contribute to the S-adenosyl-L-methionine site; these read RD and ER.

It belongs to the methyltransferase superfamily. RsmJ family.

The protein localises to the cytoplasm. It carries out the reaction guanosine(1516) in 16S rRNA + S-adenosyl-L-methionine = N(2)-methylguanosine(1516) in 16S rRNA + S-adenosyl-L-homocysteine + H(+). In terms of biological role, specifically methylates the guanosine in position 1516 of 16S rRNA. The polypeptide is Ribosomal RNA small subunit methyltransferase J (Actinobacillus succinogenes (strain ATCC 55618 / DSM 22257 / CCUG 43843 / 130Z)).